The sequence spans 163 residues: Small ribosomal subunit protein bS18c (163 aa).

Disordered stretches follow at residues 1–52 and 144–163; these read MYIS…IGPG and NLRNSNQNLRNNNRNLSSDC. A compositionally biased stretch (basic residues) spans 7–48; that stretch reads PFRKSKQPFRKSKQPFHKSKQPFRKFKQPFRKSKQPFRRRSR.

The protein belongs to the bacterial ribosomal protein bS18 family. Part of the 30S ribosomal subunit.

The protein resides in the plastid. The protein localises to the chloroplast. This Saccharum hybrid (Sugarcane) protein is Small ribosomal subunit protein bS18c.